Reading from the N-terminus, the 474-residue chain is tRNA-2-methylthio-N(6)-dimethylallyladenosine synthase (474 aa).

In terms of domain architecture, MTTase N-terminal spans 3 to 120; sequence KKLHIKTWGC…LPEMIDQIRD (118 aa). [4Fe-4S] cluster-binding residues include C12, C49, C83, C157, C161, and C164. The 233-residue stretch at 143-375 folds into the Radical SAM core domain; the sequence is RADGPSAFVS…QDRITQQAMR (233 aa). Residues 378–441 enclose the TRAM domain; it reads RQMLGTVQRI…TNSLRGTFVR (64 aa).

The protein belongs to the methylthiotransferase family. MiaB subfamily. Monomer. The cofactor is [4Fe-4S] cluster.

It is found in the cytoplasm. It carries out the reaction N(6)-dimethylallyladenosine(37) in tRNA + (sulfur carrier)-SH + AH2 + 2 S-adenosyl-L-methionine = 2-methylsulfanyl-N(6)-dimethylallyladenosine(37) in tRNA + (sulfur carrier)-H + 5'-deoxyadenosine + L-methionine + A + S-adenosyl-L-homocysteine + 2 H(+). Catalyzes the methylthiolation of N6-(dimethylallyl)adenosine (i(6)A), leading to the formation of 2-methylthio-N6-(dimethylallyl)adenosine (ms(2)i(6)A) at position 37 in tRNAs that read codons beginning with uridine. The protein is tRNA-2-methylthio-N(6)-dimethylallyladenosine synthase of Shewanella sediminis (strain HAW-EB3).